A 730-amino-acid polypeptide reads, in one-letter code: MSKQVFETIFAGKKLAVEIGQVAKQANGAALVRYGDSTVLSAAVMSKKMSTGDFFPLQINYEEKRYAAGKFPGGFNKREGRPSTDATLTARLIDRPIRPMFAEGFRNEVQVINTVLSYDADASAPMAAMFGSSLALSISDIPFNGPIAGVQVAYLDGQYVINPTAEEKKASLLELTVAGTKEAINMVESGAKELSEDIMLEALLKGHEAVRELIAFQEEIIAAVGKEKAEVELLQVDADLQAEIVGKYNADLQKAVQIEEKKAREIATEAVKEHVTAEYEERYAEHEEHDRIMRDVAEILEQMEHAEVRRLITEDKVRPDGRRVDEIRPLDAEIDFLPKVHGSGLFTRGQTQALSVLTLAPMGDTQIVDGLDEEYKKRFMHHYNFPQYSVGETGRYGAPGRREIGHGALGERALAQVLPSLEAFPYAIRLVAEVLESNGSSSQASICAGTLALMAGGVPIKAPVAGIAMGLISDGTNYTVLTDIQGLEDHFGDMDFKVAGTREGITALQMDIKIEGITPQILEEALAQAKKARFEILDVIEKVIPAPRLELAPTAPKIDTIKVDVDKIKIVIGKGGETIDKIIEETGVKIDIDEDGNIAIYSSDQEAINRTKEIIASLVREAKVGEIYEAEVVRIEKFGAFVHLFDKTDALVHISEIAWTRTNKVEDVLAVGDKVTVKVVKVDDKGRIDASMKALLPRPPRSEKSNKEDHQSVRHHGSPKDDKGKEKYDK.

Residues D489 and D495 each contribute to the Mg(2+) site. Positions 556–615 constitute a KH domain; the sequence is PKIDTIKVDVDKIKIVIGKGGETIDKIIEETGVKIDIDEDGNIAIYSSDQEAINRTKEII. The S1 motif domain maps to 625–693; it reads GEIYEAEVVR…DKGRIDASMK (69 aa). Positions 691–730 are disordered; the sequence is SMKALLPRPPRSEKSNKEDHQSVRHHGSPKDDKGKEKYDK. Positions 700–730 are enriched in basic and acidic residues; that stretch reads PRSEKSNKEDHQSVRHHGSPKDDKGKEKYDK.

Belongs to the polyribonucleotide nucleotidyltransferase family. The cofactor is Mg(2+).

It is found in the cytoplasm. The enzyme catalyses RNA(n+1) + phosphate = RNA(n) + a ribonucleoside 5'-diphosphate. Involved in mRNA degradation. Catalyzes the phosphorolysis of single-stranded polyribonucleotides processively in the 3'- to 5'-direction. This is Polyribonucleotide nucleotidyltransferase from Streptococcus mutans serotype c (strain ATCC 700610 / UA159).